The chain runs to 385 residues: Lipoyl synthase, mitochondrial (385 aa).

The tract at residues 18 to 40 is disordered; it reads TKAKNRTFSSSTVESSTKQPPQF. Residues Cys-113, Cys-118, Cys-124, Cys-144, Cys-148, Cys-151, and Ser-360 each coordinate [4Fe-4S] cluster. The Radical SAM core domain maps to 129-349; it reads ETGTATATIM…KTLGMEMGFR (221 aa).

Belongs to the radical SAM superfamily. Lipoyl synthase family. Requires [4Fe-4S] cluster as cofactor.

The protein resides in the mitochondrion. The catalysed reaction is [[Fe-S] cluster scaffold protein carrying a second [4Fe-4S](2+) cluster] + N(6)-octanoyl-L-lysyl-[protein] + 2 oxidized [2Fe-2S]-[ferredoxin] + 2 S-adenosyl-L-methionine + 4 H(+) = [[Fe-S] cluster scaffold protein] + N(6)-[(R)-dihydrolipoyl]-L-lysyl-[protein] + 4 Fe(3+) + 2 hydrogen sulfide + 2 5'-deoxyadenosine + 2 L-methionine + 2 reduced [2Fe-2S]-[ferredoxin]. The protein operates within protein modification; protein lipoylation via endogenous pathway; protein N(6)-(lipoyl)lysine from octanoyl-[acyl-carrier-protein]: step 2/2. Catalyzes the radical-mediated insertion of two sulfur atoms into the C-6 and C-8 positions of the octanoyl moiety bound to the lipoyl domains of lipoate-dependent enzymes, thereby converting the octanoylated domains into lipoylated derivatives. In Populus trichocarpa (Western balsam poplar), this protein is Lipoyl synthase, mitochondrial.